A 43-amino-acid chain; its full sequence is Potassium channel toxin gamma-KTx 4.7 (43 aa).

Cystine bridges form between cysteine 5-cysteine 23, cysteine 11-cysteine 34, cysteine 20-cysteine 39, and cysteine 24-cysteine 41.

Belongs to the ergtoxin family. Gamma-KTx 4 subfamily. In terms of tissue distribution, expressed by the venom gland.

Its subcellular location is the secreted. Its function is as follows. Reversibly blocks Kv11/ERG potassium channels. This chain is Potassium channel toxin gamma-KTx 4.7, found in Centruroides limpidus (Mexican scorpion).